A 90-amino-acid chain; its full sequence is Small ribosomal subunit protein bS20 (90 aa).

The segment at 1–27 (MANSAQAKKRARQNEKRELHNASQRSA) is disordered.

This sequence belongs to the bacterial ribosomal protein bS20 family.

Its function is as follows. Binds directly to 16S ribosomal RNA. This chain is Small ribosomal subunit protein bS20, found in Coxiella burnetii (strain CbuK_Q154) (Coxiella burnetii (strain Q154)).